The chain runs to 92 residues: MIPANFGGTELIILLVIILLLFGAKRIPELARGLGTGVREFRKGTSGAYEELEEKKGEEEKDEGGKKEAEASGRGEEEQQARAAGEAGRKQG.

Residues 2-22 (IPANFGGTELIILLVIILLLF) traverse the membrane as a helical segment. The segment at 43-92 (KGTSGAYEELEEKKGEEEKDEGGKKEAEASGRGEEEQQARAAGEAGRKQG) is disordered. Residues 53–80 (EEKKGEEEKDEGGKKEAEASGRGEEEQQ) show a composition bias toward basic and acidic residues.

It belongs to the TatA/E family. The Tat system comprises two distinct complexes: a TatABC complex, containing multiple copies of TatA, TatB and TatC subunits, and a separate TatA complex, containing only TatA subunits. Substrates initially bind to the TatABC complex, which probably triggers association of the separate TatA complex to form the active translocon.

The protein resides in the cell membrane. Functionally, part of the twin-arginine translocation (Tat) system that transports large folded proteins containing a characteristic twin-arginine motif in their signal peptide across membranes. TatA could form the protein-conducting channel of the Tat system. This is Sec-independent protein translocase protein TatA from Rubrobacter xylanophilus (strain DSM 9941 / JCM 11954 / NBRC 16129 / PRD-1).